A 146-amino-acid polypeptide reads, in one-letter code: Cystatin-C (146 aa).

A signal peptide spans 1–26 (MAGPLRAPLLLLAILAVALALSPAAG). Phosphoserine is present on Ser-43. A Secondary area of contact motif is present at residues 81–85 (QIVAG). Disulfide bonds link Cys-99–Cys-109 and Cys-123–Cys-143.

The protein belongs to the cystatin family.

The protein localises to the secreted. In terms of biological role, as an inhibitor of cysteine proteinases, this protein is thought to serve an important physiological role as a local regulator of this enzyme activity. This chain is Cystatin-C (CST3), found in Saimiri sciureus (Common squirrel monkey).